A 216-amino-acid chain; its full sequence is Adenylate kinase (216 aa).

Position 10-15 (10-15 (GAGKGT)) interacts with ATP. The segment at 30–59 (STGDMLRAAVAAGTEVGKRAKAVMDAGKLV) is NMP. Residues threonine 31, arginine 36, 57-59 (KLV), 85-88 (GFPR), and glutamine 92 each bind AMP. Positions 126–163 (GRYTCANCGAGYHDENLRPKVEGVCDRCGSTHFKRRAD) are LID. An ATP-binding site is contributed by arginine 127. Zn(2+) is bound by residues cysteine 130, cysteine 133, cysteine 150, and cysteine 153. AMP-binding residues include arginine 160 and arginine 172. An ATP-binding site is contributed by alanine 200.

The protein belongs to the adenylate kinase family. As to quaternary structure, monomer.

Its subcellular location is the cytoplasm. The enzyme catalyses AMP + ATP = 2 ADP. It functions in the pathway purine metabolism; AMP biosynthesis via salvage pathway; AMP from ADP: step 1/1. In terms of biological role, catalyzes the reversible transfer of the terminal phosphate group between ATP and AMP. Plays an important role in cellular energy homeostasis and in adenine nucleotide metabolism. This Rhizobium rhizogenes (strain K84 / ATCC BAA-868) (Agrobacterium radiobacter) protein is Adenylate kinase.